Here is a 406-residue protein sequence, read N- to C-terminus: Probable 26S proteasome regulatory subunit 10B (406 aa).

191 to 198 is an ATP binding site; the sequence is GPPGTGKT.

Belongs to the AAA ATPase family.

The protein localises to the cytoplasm. It localises to the nucleus. Functionally, the 26S proteasome is involved in the ATP-dependent degradation of ubiquitinated proteins. The regulatory (or ATPase) complex confers ATP dependency and substrate specificity to the 26S complex. In Caenorhabditis elegans, this protein is Probable 26S proteasome regulatory subunit 10B (rpt-4).